The primary structure comprises 186 residues: Ribosome-recycling factor (186 aa).

It belongs to the RRF family.

The protein localises to the cytoplasm. Responsible for the release of ribosomes from messenger RNA at the termination of protein biosynthesis. May increase the efficiency of translation by recycling ribosomes from one round of translation to another. This is Ribosome-recycling factor from Rickettsia africae (strain ESF-5).